The primary structure comprises 459 residues: UDP-N-acetylmuramate--L-alanine ligase (459 aa).

113 to 119 (GSHGKTT) is an ATP binding site.

Belongs to the MurCDEF family.

It is found in the cytoplasm. It carries out the reaction UDP-N-acetyl-alpha-D-muramate + L-alanine + ATP = UDP-N-acetyl-alpha-D-muramoyl-L-alanine + ADP + phosphate + H(+). It participates in cell wall biogenesis; peptidoglycan biosynthesis. In terms of biological role, cell wall formation. In Persephonella marina (strain DSM 14350 / EX-H1), this protein is UDP-N-acetylmuramate--L-alanine ligase.